The primary structure comprises 629 residues: Polyadenylate-binding protein, cytoplasmic and nuclear (629 aa).

The disordered stretch occupies residues 1 to 47 (MTLENKAEASPATKEETTTEAAPAEGEAKTESSEEKGSKEDQGDNAS). Positions 26-42 (GEAKTESSEEKGSKEDQ) are enriched in basic and acidic residues. RRM domains are found at residues 46-124 (ASLY…WSQR), 134-211 (GNIY…PHVP), 227-304 (TNVF…RAKK), and 330-407 (VNLY…LAQR). A disordered region spans residues 465-543 (GANPQMMMRP…RRKDGESRVA (79 aa)). Composition is skewed to low complexity over residues 493 to 506 (MYGA…QGGF) and 514 to 531 (GGQP…QFRG). Residues 542–624 (VADSISNALE…AITAYNEYLN (83 aa)) enclose the PABC domain.

Belongs to the polyadenylate-binding protein type-1 family.

The protein resides in the cytoplasm. It localises to the nucleus. Its function is as follows. Binds the poly(A) tail of mRNA. Appears to be an important mediator of the multiple roles of the poly(A) tail in mRNA biogenesis, stability and translation. In the nucleus, involved in both mRNA cleavage and polyadenylation. Is also required for efficient mRNA export to the cytoplasm. Acts in concert with a poly(A)-specific nuclease (PAN) to affect poly(A) tail shortening, which may occur concomitantly with either nucleocytoplasmic mRNA transport or translational initiation. In the cytoplasm, stimulates translation initiation and regulates mRNA decay through translation termination-coupled poly(A) shortening, probably mediated by PAN. The protein is Polyadenylate-binding protein, cytoplasmic and nuclear (PAB1) of Yarrowia lipolytica (strain CLIB 122 / E 150) (Yeast).